We begin with the raw amino-acid sequence, 196 residues long: Peptidyl-tRNA hydrolase (196 aa).

Tyrosine 19 contacts tRNA. Residue histidine 24 is the Proton acceptor of the active site. 3 residues coordinate tRNA: tyrosine 68, asparagine 70, and asparagine 116.

It belongs to the PTH family. As to quaternary structure, monomer.

The protein localises to the cytoplasm. It catalyses the reaction an N-acyl-L-alpha-aminoacyl-tRNA + H2O = an N-acyl-L-amino acid + a tRNA + H(+). Functionally, hydrolyzes ribosome-free peptidyl-tRNAs (with 1 or more amino acids incorporated), which drop off the ribosome during protein synthesis, or as a result of ribosome stalling. Its function is as follows. Catalyzes the release of premature peptidyl moieties from peptidyl-tRNA molecules trapped in stalled 50S ribosomal subunits, and thus maintains levels of free tRNAs and 50S ribosomes. The sequence is that of Peptidyl-tRNA hydrolase from Aromatoleum aromaticum (strain DSM 19018 / LMG 30748 / EbN1) (Azoarcus sp. (strain EbN1)).